The following is a 293-amino-acid chain: ATP synthase gamma chain (293 aa).

Belongs to the ATPase gamma chain family. F-type ATPases have 2 components, CF(1) - the catalytic core - and CF(0) - the membrane proton channel. CF(1) has five subunits: alpha(3), beta(3), gamma(1), delta(1), epsilon(1). CF(0) has three main subunits: a, b and c.

Its subcellular location is the cell inner membrane. Produces ATP from ADP in the presence of a proton gradient across the membrane. The gamma chain is believed to be important in regulating ATPase activity and the flow of protons through the CF(0) complex. The polypeptide is ATP synthase gamma chain (Psychrobacter arcticus (strain DSM 17307 / VKM B-2377 / 273-4)).